The primary structure comprises 217 residues: 3,4-dihydroxy-2-butanone 4-phosphate synthase (217 aa).

D-ribulose 5-phosphate is bound by residues 37-38, aspartate 42, 150-154, and glutamate 174; these read RE and RGGHT. A Mg(2+)-binding site is contributed by glutamate 38. Histidine 153 provides a ligand contact to Mg(2+).

The protein belongs to the DHBP synthase family. Homodimer. Requires Mg(2+) as cofactor. It depends on Mn(2+) as a cofactor.

The enzyme catalyses D-ribulose 5-phosphate = (2S)-2-hydroxy-3-oxobutyl phosphate + formate + H(+). Its pathway is cofactor biosynthesis; riboflavin biosynthesis; 2-hydroxy-3-oxobutyl phosphate from D-ribulose 5-phosphate: step 1/1. Its function is as follows. Catalyzes the conversion of D-ribulose 5-phosphate to formate and 3,4-dihydroxy-2-butanone 4-phosphate. The sequence is that of 3,4-dihydroxy-2-butanone 4-phosphate synthase from Salmonella paratyphi A (strain ATCC 9150 / SARB42).